The sequence spans 413 residues: MNHTKLKLSAVALTLALGLSACSGESPEKQVQSAESEQMKAVDVDKSMPMQSIESTAKRIGESAANWQIAQFGNLDYIPESHRAKSENAKFWIQASFYIGLTRWIDATDDKQLESFVKQVAEKENYELILERPYHADDHAIAQTYLWLAERAGVQEAYMPTKEVFDMILSKPPQVGLNMGDSESSSGKYHLEGNCQLRWCWADALFMAPRAWAQMTKVTSDPKYLEYGNKEFWAAADYLFSDEYGLFFRDSRYFDAKSDNGEPVFWGRGNGWVFAAIPMIIEELPEGHPSKDRYIELYKKHAEGLMALQKEDGYWPASLMDPDKVRTPEVSGTGFITFGLAWGVNNGILTDQRSKDVVEKGWSAITKAVTDDGRVNWVQHVGKSPDPVKESDSQLYGTGAVLLAASEMLIWNK.

Positions 1-21 (MNHTKLKLSAVALTLALGLSA) are cleaved as a signal peptide. A lipid anchor (N-palmitoyl cysteine) is attached at C22. The S-diacylglycerol cysteine moiety is linked to residue C22. The active-site Proton donor is D203.

It belongs to the glycosyl hydrolase 105 family.

It is found in the cell membrane. Glucuronyl hydrolase involved in ulvan degradation. Ulvan is the main polysaccharide component of the Ulvales (green seaweed) cell wall. It is composed of disaccharide building blocks comprising 3-sulfated rhamnose (Rha3S) linked to D-glucuronic acid (GlcA), L-iduronic acid (IduA), or D-xylose (Xyl). Unsaturated 3S-rhamnoglycuronyl hydrolase works together with ulvan lyases to fully degrade the ulvan polymer, catalyzing specifically the cleavage of the unsaturated 4-deoxy-L-threo-hex-4-enopyranosiduronic acid (deltaUA) of the deltaUA-oligosaccharides deltaUA-Rha3S, deltaUA-Rha3S-IduA-Rha3S and deltaUA-Rha3S-Xyl-Rha3S, the end products of the ulvan lyase reaction. This Alteromonas sp. (strain LOR) protein is Unsaturated 3S-rhamnoglycuronyl hydrolase.